Reading from the N-terminus, the 525-residue chain is uncharacterized protein (525 aa).

Helical transmembrane passes span 28 to 48 (FIDV…NLII) and 353 to 373 (GVNA…LFTP). The Pterin-binding domain maps to 146 to 394 (DIKIGKLKVG…ELKIASKMMF (249 aa)).

Its subcellular location is the cell membrane. Functionally, unknown. Does not possess dihydropteroate synthase (DHPS) activity since it does not catalyze the condensation of 6-hydroxymethyl-7,8-dihydropterin pyrophosphate (DHPP) and 4-aminobenzoate to form 7,8-dihydropteroate. This is an uncharacterized protein from Methanocaldococcus jannaschii (strain ATCC 43067 / DSM 2661 / JAL-1 / JCM 10045 / NBRC 100440) (Methanococcus jannaschii).